Consider the following 70-residue polypeptide: MKVYCLLLVLLVGLVSQAHGQLDKKCQMVCTMDYRPVCGSDGRTYPNKCTLTSTACMSQRSITVFHDGEC.

The signal sequence occupies residues 1–20 (MKVYCLLLVLLVGLVSQAHG). In terms of domain architecture, Kazal-like spans 21-70 (QLDKKCQMVCTMDYRPVCGSDGRTYPNKCTLTSTACMSQRSITVFHDGEC). 3 disulfide bridges follow: cysteine 26–cysteine 56, cysteine 30–cysteine 49, and cysteine 38–cysteine 70.

It belongs to the conopeptide P-like superfamily. In terms of tissue distribution, expressed by the venom duct.

Its subcellular location is the secreted. Acts as a neurotoxin by inhibiting an ion channel. May also act as a serine protease inhibitor, since it possess the kazal serine protease inhibitor signature. This chain is Turripeptide Gsg9.2, found in Gemmula sogodensis (Gem-turris).